Consider the following 445-residue polypeptide: GTPase Der (445 aa).

2 consecutive EngA-type G domains span residues 3-167 and 180-353; these read PVIA…YADQ and IKIA…AAAM. Residues 9–16, 56–60, 119–122, 186–193, 233–237, and 298–301 contribute to the GTP site; these read GRPNVGKS, DTGGF, NKAE, DTAGL, and NKWD. The KH-like domain maps to 354–438; it reads AKLPTPKLTR…PLRIEFRSST (85 aa).

The protein belongs to the TRAFAC class TrmE-Era-EngA-EngB-Septin-like GTPase superfamily. EngA (Der) GTPase family. In terms of assembly, associates with the 50S ribosomal subunit.

GTPase that plays an essential role in the late steps of ribosome biogenesis. The protein is GTPase Der of Burkholderia multivorans (strain ATCC 17616 / 249).